We begin with the raw amino-acid sequence, 403 residues long: Sorting nexin-32 (403 aa).

The PX domain maps to 20-168; it reads LQGDSSLQVE…VFLEYGQDLS (149 aa). Residues 258 to 335 adopt a coiled-coil conformation; that stretch reads NQLRTSFLKL…KARTRNREVR (78 aa).

Belongs to the sorting nexin family.

Functionally, may be involved in several stages of intracellular trafficking. The chain is Sorting nexin-32 (SNX32) from Homo sapiens (Human).